A 96-amino-acid chain; its full sequence is Frd operon uncharacterized protein C (96 aa).

This sequence belongs to the HupF/HypC family.

The polypeptide is Frd operon uncharacterized protein C (Proteus vulgaris).